A 123-amino-acid chain; its full sequence is MIEDEFIINGTNNVHIAKYHYFAMFKFLKKSPICFFVFMANPTSTTLNPFMSFVIEEDASNDEAFLPFSSNCNLLTCSRNNLISFSKPSRARDSLASFATNGLSSNLLFFTVNNFKMFSNSSV.

This is an uncharacterized protein from Saccharomyces cerevisiae (strain ATCC 204508 / S288c) (Baker's yeast).